The primary structure comprises 191 residues: Glycerol-3-phosphate acyltransferase (191 aa).

5 consecutive transmembrane segments (helical) span residues 3–23 (YLIVALSSYLLGSIPFGFILT), 51–71 (TLGYATLLLDITKAVLPVLYV), 78–98 (YIFIASLSAFLGHVFPIWLKF), 108–128 (VGILFSINIFLGLVFIISWAV), and 150–170 (YLIVFENYNSIFFIIMFVLIF).

It belongs to the PlsY family. In terms of assembly, probably interacts with PlsX.

The protein resides in the cell inner membrane. The enzyme catalyses an acyl phosphate + sn-glycerol 3-phosphate = a 1-acyl-sn-glycero-3-phosphate + phosphate. It functions in the pathway lipid metabolism; phospholipid metabolism. In terms of biological role, catalyzes the transfer of an acyl group from acyl-phosphate (acyl-PO(4)) to glycerol-3-phosphate (G3P) to form lysophosphatidic acid (LPA). This enzyme utilizes acyl-phosphate as fatty acyl donor, but not acyl-CoA or acyl-ACP. The chain is Glycerol-3-phosphate acyltransferase from Pelagibacter ubique (strain HTCC1062).